The sequence spans 193 residues: NADH-quinone oxidoreductase subunit B (193 aa).

4 residues coordinate [4Fe-4S] cluster: Cys-72, Cys-73, Cys-137, and Cys-167.

The protein belongs to the complex I 20 kDa subunit family. In terms of assembly, NDH-1 is composed of 14 different subunits. Subunits NuoB, C, D, E, F, and G constitute the peripheral sector of the complex. Requires [4Fe-4S] cluster as cofactor.

The protein localises to the cell inner membrane. The catalysed reaction is a quinone + NADH + 5 H(+)(in) = a quinol + NAD(+) + 4 H(+)(out). NDH-1 shuttles electrons from NADH, via FMN and iron-sulfur (Fe-S) centers, to quinones in the respiratory chain. Couples the redox reaction to proton translocation (for every two electrons transferred, four hydrogen ions are translocated across the cytoplasmic membrane), and thus conserves the redox energy in a proton gradient. The sequence is that of NADH-quinone oxidoreductase subunit B from Brucella abortus (strain S19).